Reading from the N-terminus, the 304-residue chain is tRNA-uridine aminocarboxypropyltransferase 1 (304 aa).

The segment at 1–30 (MALSPSVVPQESEENNANCVETKQSQTAST) is disordered. Residues 15–30 (NNANCVETKQSQTAST) show a composition bias toward polar residues. The DXTW motif lies at 206–209 (DSTW).

It belongs to the TDD superfamily. DTWD1 family.

It localises to the nucleus. It catalyses the reaction a uridine in tRNA + S-adenosyl-L-methionine = a 3-[(3S)-3-amino-3-carboxypropyl]uridine in tRNA + S-methyl-5'-thioadenosine + H(+). Its function is as follows. Catalyzes the formation of 3-(3-amino-3-carboxypropyl)uridine (acp3U) at position 20 in the D-loop of several cytoplasmic tRNAs (acp3U(20)). This chain is tRNA-uridine aminocarboxypropyltransferase 1, found in Rattus norvegicus (Rat).